Reading from the N-terminus, the 417-residue chain is GTP-binding protein YPT11 (417 aa).

The tract at residues 1–34 is disordered; that stretch reads MSQRKRYSLNVVTSPSIPSPTPSAPIRTNESNWE. Residues 97 to 104, 228 to 232, and 292 to 295 each bind GTP; these read GDANVGKT, DTAGQ, and NKID. Residues Cys415 and Cys416 are each lipidated (S-geranylgeranyl cysteine).

The protein belongs to the small GTPase superfamily. Rab family. Interacts with MYO2 (via C-terminal tail domain). Interacts with YIF1, YIP3, YIP4 and YIP5.

The protein resides in the endoplasmic reticulum membrane. The protein localises to the bud tip. It is found in the bud neck. Involved in the positive control of both endoplasmic reticulum (ER) and mitochondrion inheritance during cell divison. Required for the MYO2-dependent retention of newly inherited mitochondria at the bud tip in developing daughter cells. The protein is GTP-binding protein YPT11 (YPT11) of Saccharomyces cerevisiae (strain YJM789) (Baker's yeast).